Reading from the N-terminus, the 143-residue chain is MQCNINDIIKILPHSYPFLLVDRVIECDPGMSIKAIKNVTFNEQFFIGHFPGHPIMPGVLIIESLAQASAICVLGKKTVENKVVYFMSIENAKFRKPVTPGDTLILQSNFEGLRLGVYKFKCVASVGKEEVAGATILAKLQDK.

His-49 is an active-site residue.

Belongs to the thioester dehydratase family. FabZ subfamily.

The protein resides in the cytoplasm. It catalyses the reaction a (3R)-hydroxyacyl-[ACP] = a (2E)-enoyl-[ACP] + H2O. Its function is as follows. Involved in unsaturated fatty acids biosynthesis. Catalyzes the dehydration of short chain beta-hydroxyacyl-ACPs and long chain saturated and unsaturated beta-hydroxyacyl-ACPs. This is 3-hydroxyacyl-[acyl-carrier-protein] dehydratase FabZ from Wolbachia pipientis subsp. Culex pipiens (strain wPip).